We begin with the raw amino-acid sequence, 404 residues long: Probable oxalate decarboxylase ARB_04859 (404 aa).

An N-terminal signal peptide occupies residues 1-17 (MKYSAVLVAALAAIADA). The Cupin type-1 1 domain occupies 74–215 (FSLSKTRMLY…NFGVPPSTFD (142 aa)). Residues His-117, His-119, Glu-123, and His-162 each contribute to the Mn(2+) site. 2 N-linked (GlcNAc...) asparagine glycosylation sites follow: Asn-226 and Asn-244. The Cupin type-1 2 domain maps to 249 to 393 (FHISNAPEIQ…AINVPIEVIE (145 aa)). Positions 296, 298, 303, and 342 each coordinate Mn(2+). N-linked (GlcNAc...) asparagine glycosylation is present at Asn-346. Glu-357 functions as the Proton donor in the catalytic mechanism.

Mn(2+) is required as a cofactor.

The protein resides in the secreted. It carries out the reaction oxalate + H(+) = formate + CO2. Functionally, converts oxalate to formate and CO(2) in an O(2)-dependent reaction. Can also catalyze minor side reactions: oxalate oxidation to produce H(2)O(2), and oxalate-dependent, H(2)O(2)-independent dye oxidations. The chain is Probable oxalate decarboxylase ARB_04859 from Arthroderma benhamiae (strain ATCC MYA-4681 / CBS 112371) (Trichophyton mentagrophytes).